The chain runs to 308 residues: UDP-N-acetylenolpyruvoylglucosamine reductase (308 aa).

The FAD-binding PCMH-type domain occupies 30–213 (RVGGAAEWFI…KATTQSHLDH (184 aa)). Arginine 176 is a catalytic residue. Serine 227 (proton donor) is an active-site residue. Glutamate 297 is a catalytic residue.

The protein belongs to the MurB family. FAD serves as cofactor.

The protein resides in the cytoplasm. The catalysed reaction is UDP-N-acetyl-alpha-D-muramate + NADP(+) = UDP-N-acetyl-3-O-(1-carboxyvinyl)-alpha-D-glucosamine + NADPH + H(+). Its pathway is cell wall biogenesis; peptidoglycan biosynthesis. Functionally, cell wall formation. The chain is UDP-N-acetylenolpyruvoylglucosamine reductase from Acaryochloris marina (strain MBIC 11017).